A 264-amino-acid chain; its full sequence is PDZ domain-containing protein 9 (264 aa).

The PDZ domain maps to 30 to 109 (QTKLTVGSLG…GTVLQIKVYR (80 aa)).

The protein is PDZ domain-containing protein 9 (PDZD9) of Homo sapiens (Human).